The chain runs to 1002 residues: MDRPNTPSRPPEYTLPSYEDEHDTPTGQNPAAVRLLTSFEDPFDHSSKSSPRANLRPRTTRRSYQPSVVSSHSRSASVLDEAPSMPPPDSSYVPFAHRETSSPHRPWTPSSRVSEFSRPPPSNVSYEPSDLNGSPRPGTPSSRYGGSPRRPLPPAPLFSNPGRTSQAFADDATVSIPLDGSDDVFGPETDLSDSRPLPTHRDSFMSGSQETLNEDAEDYVKVEHYGPAPDGAQERRGVRAPQMSKKEVQLINGELVLECKIPTILYSFLPRRNEVEFTHMRYTAVTCDPDDFVERGYNLRQSIGRTTRETELFICITMYNEDEICFTRTMHAVMKNISHFCSRSRSRTWGENGWQKIVVCIISDGREKIHPRTLDALAAMGVYQHGIAKNFVNNRAVQAHVYEYTTQVSLDADLKFKGAEKGIVPCQLIFCLKEKNSRKLNSHRWFFNAFGKALNPNVCILLDVGTRPGSNSLYHLWKAFDTDSNVAGACGEIKAMKGRFGSNLLNPLVASQNFEYKLSNILDKPLESVFGYITVLPGALSAYRYHALQNDETGHGPLSQYFKGETLHGQHADVFTANMYLAEDRILCWELVAKRGERWVLKYVKSCTGETDVPDAVPEFISQRRRWLNGAFFAAVYSLVQFRQILATDHTIARKILLYIEFVYQFVQLLFTYFSLANFYLTFYFVAGGLTDKTVDPFGHNIGSVIFTILRYTCVLLIATQFILSLGNRPQGAKKLYLASMIIYGVIMTYTSFACIYIVVRQLTGKSQDFAIGNNVFTNLIVSMASTIGLYFVMSFLYLEPWHMFTSSLQYFLLLPSYICTLQVYAFCNTHDVTWGTKGDNVIKTDLGGAVGKGETVELEMPSEQLDIDSGYDEALRNLRDRLAVPGSPVSEAQMQEDYYKSVRTYMVVTWMIANGILAMAVSEIYSNKGIGDNFYLRFILWAVASLAIFRALGSTTFAIINVVNIVVEGRIRMNVKVPSWMGGFGSKISEKVSSVGSSLKS.

Disordered regions lie at residues 1 to 165 (MDRP…GRTS) and 178 to 209 (LDGSDDVFGPETDLSDSRPLPTHRDSFMSGSQ). Low complexity predominate over residues 63 to 78 (SYQPSVVSSHSRSASV). Residue Asn-123 is glycosylated (N-linked (GlcNAc...) asparagine). Residue Asn-336 is glycosylated (N-linked (GlcNAc...) asparagine). 8 consecutive transmembrane segments (helical) span residues 627 to 647 (WLNGAFFAAVYSLVQFRQILA), 669 to 689 (LLFTYFSLANFYLTFYFVAGG), 704 to 724 (SVIFTILRYTCVLLIATQFIL), 740 to 760 (SMIIYGVIMTYTSFACIYIVV), 780 to 800 (LIVSMASTIGLYFVMSFLYLE), 808 to 828 (SLQYFLLLPSYICTLQVYAFC), 906 to 926 (YMVVTWMIANGILAMAVSEIY), and 940 to 960 (ILWAVASLAIFRALGSTTFAI).

Belongs to the chitin synthase family. Class II subfamily. In terms of tissue distribution, expressed in hyphal bodies.

It is found in the cell membrane. The enzyme catalyses [(1-&gt;4)-N-acetyl-beta-D-glucosaminyl](n) + UDP-N-acetyl-alpha-D-glucosamine = [(1-&gt;4)-N-acetyl-beta-D-glucosaminyl](n+1) + UDP + H(+). Functionally, polymerizes chitin, a structural polymer of the cell wall and septum, by transferring the sugar moiety of UDP-GlcNAc to the non-reducing end of the growing chitin polymer. Contributes to the production of conidia and the ability of fungal conidia to germinate. Involved in fungal stress tolerances. The sequence is that of Chitin synthase II from Metarhizium acridum (strain CQMa 102).